The following is a 321-amino-acid chain: Probable cell division protein WhiA (321 aa).

Positions 276 to 309 (NLKELGELLEPPVGKSGVNHRLRKLEKIAEQLHQ) form a DNA-binding region, H-T-H motif.

This sequence belongs to the WhiA family.

Functionally, involved in cell division and chromosome segregation. The chain is Probable cell division protein WhiA from Natranaerobius thermophilus (strain ATCC BAA-1301 / DSM 18059 / JW/NM-WN-LF).